The sequence spans 175 residues: Movement protein (175 aa).

The homodimerization stretch occupies residues 30-47 (ADLDDDEEVTTGQEELFL). The RNA-binding stretch occupies residues 50–156 (EQVRARHLFS…QRLTSTERNG (107 aa)). Serine 64 and serine 133 each carry phosphoserine. Polar residues-rich tracts occupy residues 116-141 (SLTSWTHTVNSTPFPQLSTSSGSQSP) and 148-169 (RLTSTERNGTTLPRTNSGSSTK). Positions 116–175 (SLTSWTHTVNSTPFPQLSTSSGSQSPGKGRLQRLTSTERNGTTLPRTNSGSSTKAMVLHR) are disordered.

The protein belongs to the polerovirus movement protein family. In terms of assembly, homodimer. In terms of processing, phosphorylated.

The protein localises to the host cell junction. Its subcellular location is the host plasmodesma. It localises to the host Golgi apparatus. In terms of biological role, together with movement protein P3a, facilitates long-distance movement of virions in host. Transports viral genome to neighboring plant cells directly through plasmosdesmata, without any budding. The movement protein allows efficient cell to cell propagation, by bypassing the host cell wall barrier. Binds ssRNA. The polypeptide is Movement protein (Turnip yellows virus (isolate FL-1) (TuYV)).